Reading from the N-terminus, the 392-residue chain is Formate-dependent phosphoribosylglycinamide formyltransferase (392 aa).

N(1)-(5-phospho-beta-D-ribosyl)glycinamide is bound by residues 22–23 (EL) and Glu-82. ATP is bound by residues Arg-114, Lys-155, 160–165 (SSGKGQ), 195–198 (EGVV), and Glu-203. An ATP-grasp domain is found at 119–308 (RLAAEELGLP…EFALHVRAFL (190 aa)). Positions 267 and 279 each coordinate Mg(2+). N(1)-(5-phospho-beta-D-ribosyl)glycinamide is bound by residues Asp-286, Lys-355, and 362–363 (RR).

The protein belongs to the PurK/PurT family. As to quaternary structure, homodimer.

It carries out the reaction N(1)-(5-phospho-beta-D-ribosyl)glycinamide + formate + ATP = N(2)-formyl-N(1)-(5-phospho-beta-D-ribosyl)glycinamide + ADP + phosphate + H(+). It participates in purine metabolism; IMP biosynthesis via de novo pathway; N(2)-formyl-N(1)-(5-phospho-D-ribosyl)glycinamide from N(1)-(5-phospho-D-ribosyl)glycinamide (formate route): step 1/1. Its function is as follows. Involved in the de novo purine biosynthesis. Catalyzes the transfer of formate to 5-phospho-ribosyl-glycinamide (GAR), producing 5-phospho-ribosyl-N-formylglycinamide (FGAR). Formate is provided by PurU via hydrolysis of 10-formyl-tetrahydrofolate. This Salmonella arizonae (strain ATCC BAA-731 / CDC346-86 / RSK2980) protein is Formate-dependent phosphoribosylglycinamide formyltransferase.